The sequence spans 428 residues: E3 ubiquitin-protein ligase RNF128 (428 aa).

Positions 1-38 (MGPPPGAGVSCRGGCGFSRLLAWCFLLALSPQAPGSRG) are cleaved as a signal peptide. 3 N-linked (GlcNAc...) asparagine glycosylation sites follow: Asn-48, Asn-59, and Asn-101. The region spanning 75–183 (SPLEPVAGVL…LKGTKILQSI (109 aa)) is the PA domain. The helical transmembrane segment at 208 to 228 (IFFVSVSFFIITAATVGYFIF) threads the bilayer. The segment at 277–318 (CAVCIELYKPNDLVRILTCNHIFHKTCVDPWLLEHRTCPMCK) adopts an RING-type; atypical zinc-finger fold. The interval 346–428 (ISNSASSHEE…QETAVREIKS (83 aa)) is disordered. Positions 360 to 371 (ETASSGYASVQG) are enriched in polar residues.

Post-translationally, auto-ubiquitinated. Controls the development of T-cell clonal anergy by ubiquitination.

It localises to the cytoplasm. The protein localises to the endomembrane system. The protein resides in the cytoskeleton. It is found in the perinuclear region. The catalysed reaction is S-ubiquitinyl-[E2 ubiquitin-conjugating enzyme]-L-cysteine + [acceptor protein]-L-lysine = [E2 ubiquitin-conjugating enzyme]-L-cysteine + N(6)-ubiquitinyl-[acceptor protein]-L-lysine.. It functions in the pathway protein modification; protein ubiquitination. In terms of biological role, E3 ubiquitin-protein ligase that catalyzes 'Lys-27', 'Lys-48'- or 'Lys-63'-linked polyubiquitin chains formation and plays a role in different biological processes such as modulation of immune response, cytoskeletal dynamics or protein homeostasis. Inhibits IL2 and IL4 transcription, thereby playing an important role in the induction of the anergic phenotype, a long-term stable state of T-lymphocyte unresponsiveness to antigenic stimulation associated with the blockade of interleukin production. Ubiquitinates ARPC5 with 'Lys-48' linkages and COR1A with 'Lys-63' linkages leading to their degradation, down-regulation of these cytoskeletal components results in impaired lamellipodium formation and reduced accumulation of F-actin at the immunological synapse. Functions in the patterning of the dorsal ectoderm; sensitizes ectoderm to respond to neural-inducing signals. Plays a positive role in innate immune response by promoting 'Lys-63'-linked ubiquitination of TBK1 after RNA- or DNA-virus infection. Regulates alveolar macrophage activation and neutrophil infiltration by interacting with TLR4, targeting it for degradation, and inhibiting NF-kappa-B activation, hence decreasing pro-inflammatory cytokines. Negatively regulates the IL-3/STAT5 signaling pathway by facilitating 'Lys-27'-linked polyubiquitination of IL3RA leading to its degradation via lysosomal pathway. Directly regulates the N-glycosylation process in the endoplasmic reticulum by targeting the glycosyl-transferase RPN1 for ubiquitination and degradation. Other substrates targeted for degradation by RNF128 include transmembrane proteins CD40L, CD83 or the tetraspanin CD151. In Homo sapiens (Human), this protein is E3 ubiquitin-protein ligase RNF128 (RNF128).